Here is a 1673-residue protein sequence, read N- to C-terminus: Protein TIC 214 (1673 aa).

The next 6 membrane-spanning stretches (helical) occupy residues 18–38, 67–87, 90–110, 127–147, 175–195, and 218–238; these read IINSVVVVGLYYGFLTTFSIG, FITGQLIMFISIYYAPLHLAL, PHTITVLALPYLLFHFFCNTH, LSIQCVFLNNLIFQLFNHFIL, VGWIIGHIILMKSIGLLVVWI, and SMSIAGILNILLFVTCVYYLG.

The protein belongs to the TIC214 family. Part of the Tic complex.

It localises to the plastid. The protein localises to the chloroplast inner membrane. In terms of biological role, involved in protein precursor import into chloroplasts. May be part of an intermediate translocation complex acting as a protein-conducting channel at the inner envelope. The protein is Protein TIC 214 of Lactuca sativa (Garden lettuce).